A 292-amino-acid chain; its full sequence is Protein sarah (292 aa).

Over residues 1–51 (MSDAAKSNNNASADAPDPTTPDATGEADAANAATPTTPRGNHNNNNSANGR) the composition is skewed to low complexity. The tract at residues 1-111 (MSDAAKSNNN…TEPEVDADSF (111 aa)) is disordered. Residues serine 67, serine 72, and serine 100 each carry the phosphoserine modification. Residues 98 to 111 (VDSDTEPEVDADSF) show a composition bias toward acidic residues. 2 positions are modified to phosphothreonine: threonine 102 and threonine 196. Phosphoserine is present on residues serine 215 and serine 219. Threonine 246 bears the Phosphothreonine mark.

Belongs to the RCAN family. As to quaternary structure, interacts with Pp2B-14D, CanA-14F and CanB2. Phosphorylation at Ser-215 and Ser-219 is essential for calcineurin activation and completion of female meiosis. Sgg is required for phosphorylation of Ser-215 in activated eggs. Ser-100, Thr-102 and Ser-219 are highly phosphorylated in both ovaries and activated eggs; however, phosphorylation at Ser-100 or Thr-102 is not required for sra function in completion of female meiosis. In terms of tissue distribution, expressed in central nervous system of the third instar larvae, with a relatively intense signal in the brain and weak signals in the ventral ganglion. Relatively low, but ubiquitous expression level is observed in leg and wing imaginal disks, no signal is detected in the eye-antennal disks. Expressed in all neurons in the adult brain.

Required for elongation of meiosis I spindle. Critical for ovulation, meiotic progression in oocytes and female courtship behavior, including their postmating changes. Regulates female meiosis by controlling calcineurin activity in the germline. Has a role in calcium signaling during egg activation; bcd mRNA polyadenylation and translation in the oocyte. The chain is Protein sarah (sra) from Drosophila melanogaster (Fruit fly).